The following is a 347-amino-acid chain: DnaJ protein ERDJ3B (347 aa).

A signal peptide spans 1-23 (MAAPRWIGPLLLLLLHFVAAVAG). The 66-residue stretch at 25–90 (SYYDVLQVPK…EKRKIYDRYG (66 aa)) folds into the J domain.

In terms of assembly, interacts with BIP1.

The protein resides in the endoplasmic reticulum. Its function is as follows. May play a role in protein folding in the endoplasmic reticulum. The sequence is that of DnaJ protein ERDJ3B from Oryza sativa subsp. japonica (Rice).